We begin with the raw amino-acid sequence, 268 residues long: Small ribosomal subunit protein uS2 (268 aa).

The protein belongs to the universal ribosomal protein uS2 family.

The sequence is that of Small ribosomal subunit protein uS2 from Caulobacter vibrioides (strain ATCC 19089 / CIP 103742 / CB 15) (Caulobacter crescentus).